Reading from the N-terminus, the 162-residue chain is Beta-lactoglobulin (162 aa).

3 disulfides stabilise this stretch: cysteine 66–cysteine 160, cysteine 106–cysteine 119, and cysteine 106–cysteine 121.

This sequence belongs to the calycin superfamily. Lipocalin family. In terms of assembly, under physiological conditions beta-lactoglobulin exists as an equilibrium mixture of monomeric and dimeric forms. Post-translationally, alternate disulfide bonds occur in equal amounts.

Its subcellular location is the secreted. Its function is as follows. Lactoglobulin is the primary component of whey, it binds retinol and is probably involved in the transport of that molecule. This chain is Beta-lactoglobulin (LGB), found in Ovis aries musimon (Mouflon).